The sequence spans 426 residues: Actin-like protein 6B (426 aa).

Positions 39-82 are essential for mediating its function in dendritic development; may contribute to neuronal-specific targeting; it reads TTVGLLAAEEGGGLELEGDKEKKGKIFHIDTNALHVPRDGAEVM.

Belongs to the actin family. As to quaternary structure, component of the multiprotein chromatin-remodeling complexes SWI/SNF: SWI/SNF-A (BAF), SWI/SNF-B (PBAF) and related complexes. The canonical complex contains a catalytic subunit (either SMARCA4/BRG1/BAF190A or SMARCA2/BRM/BAF190B) and at least SMARCE1, ACTL6A/BAF53, SMARCC1/BAF155, SMARCC2/BAF170 and SMARCB1/SNF5/BAF47. Other subunits specific to each of the complexes may also be present permitting several possible combinations developmentally and tissue specific. Component of the BAF complex, which includes at least actin (ACTB), ARID1A/BAF250A, ARID1B/BAF250B, SMARCA2/BRM, SMARCA4/BRG1/BAF190A, ACTL6A/BAF53, ACTL6B/BAF53B, SMARCE1/BAF57, SMARCC1/BAF155, SMARCC2/BAF170, SMARCB1/SNF5/INI1 and one or more SMARCD1/BAF60A, SMARCD2/BAF60B, or SMARCD3/BAF60C. Component of neuron-specific chromatin remodeling complex (nBAF complex) composed of at least, ARID1A/BAF250A or ARID1B/BAF250B, SMARCD1/BAF60A or SMARCD2/BAF60B or SMARCD3/BAF60C, SMARCA2/BRM/BAF190B, SMARCA4/BRG1/BAF190A, SMARCB1/BAF47, SMARCC1/BAF155, SMARCE1/BAF57, SMARCC2/BAF170, DPF1/BAF45B, DPF3/BAF45C, ACTL6B/BAF53B and actin (ACTB). Note that the nBAF complex is polymorphic in regard to the ATPase, SMARCA2 and SMARCA4 occupying mutually exclusive positions. May be a component of the SWI/SNF-B (PBAF) chromatin remodeling complex, at least composed of SMARCA4/BRG1, SMARCB1/BAF47/SNF5, ACTL6A/BAF53A or ACTL6B/BAF53B, SMARCE1/BAF57, SMARCD1/BAF60A, SMARCD2/BAF60B, perhaps SMARCD3/BAF60C, SMARCC1/BAF155, SMARCC2/BAF170, PBRM1/BAF180, ARID2/BAF200 and actin.

It is found in the nucleus. Involved in transcriptional activation and repression of select genes by chromatin remodeling (alteration of DNA-nucleosome topology). Component of SWI/SNF chromatin remodeling complexes that carry out key enzymatic activities, changing chromatin structure by altering DNA-histone contacts within a nucleosome in an ATP-dependent manner. Belongs to the neuron-specific chromatin remodeling complex (nBAF complex), as such plays a role in remodeling mononucleosomes in an ATP-dependent fashion, and is required for postmitotic neural development and dendritic outgrowth. During neural development a switch from a stem/progenitor to a postmitotic chromatin remodeling mechanism occurs as neurons exit the cell cycle and become committed to their adult state. The transition from proliferating neural stem/progenitor cells to postmitotic neurons requires a switch in subunit composition of the npBAF and nBAF complexes. As neural progenitors exit mitosis and differentiate into neurons, npBAF complexes which contain ACTL6A/BAF53A and PHF10/BAF45A, are exchanged for homologous alternative ACTL6B/BAF53B and DPF1/BAF45B or DPF3/BAF45C subunits in neuron-specific complexes (nBAF). The npBAF complex is essential for the self-renewal/proliferative capacity of the multipotent neural stem cells. The nBAF complex along with CREST plays a role regulating the activity of genes essential for dendrite growth. ACTL6B/BAF53B is not essential for assembly of the nBAF complex but is required for targeting the complex and CREST to the promoter of genes essential for dendritic growth. Essential for neuronal maturation and dendrite development. In Homo sapiens (Human), this protein is Actin-like protein 6B.